We begin with the raw amino-acid sequence, 317 residues long: Adenine deaminase (317 aa).

Positions 14, 16, and 194 each coordinate Zn(2+). Glu197 serves as the catalytic Proton donor. Asp275 contributes to the Zn(2+) binding site. Asp276 lines the substrate pocket.

Belongs to the metallo-dependent hydrolases superfamily. Adenosine and AMP deaminases family. Adenine deaminase type 2 subfamily. The cofactor is Zn(2+).

It carries out the reaction adenine + H2O + H(+) = hypoxanthine + NH4(+). Its function is as follows. Catalyzes the hydrolytic deamination of adenine to hypoxanthine. Plays an important role in the purine salvage pathway and in nitrogen catabolism. The protein is Adenine deaminase of Pseudomonas syringae pv. tomato (strain ATCC BAA-871 / DC3000).